The chain runs to 200 residues: MSDANLLEASVRTEFGKGAARRTRRAGNVPAVLYGHQSEPQHLSLNAQAFAAILREHGTNAVLNLDIEGKKQLALTKSVVVHPIRRYIEHADLLIVKRGEKVTADVAVTVTGDAAPGTLVTQEATTISIEAEALNLPEAIEVSVEDAEIGTQITAGSIALPQGVTLASDPELLVVNVIAAPAAEPAPGEEAAEAEGESAE.

It belongs to the bacterial ribosomal protein bL25 family. CTC subfamily. In terms of assembly, part of the 50S ribosomal subunit; part of the 5S rRNA/L5/L18/L25 subcomplex. Contacts the 5S rRNA. Binds to the 5S rRNA independently of L5 and L18.

Functionally, this is one of the proteins that binds to the 5S RNA in the ribosome where it forms part of the central protuberance. This Nocardia farcinica (strain IFM 10152) protein is Large ribosomal subunit protein bL25.